We begin with the raw amino-acid sequence, 341 residues long: Ribose-phosphate pyrophosphokinase 5 (341 aa).

D152, H154, and D167 together coordinate Mg(2+).

Belongs to the ribose-phosphate pyrophosphokinase family.

The protein resides in the cytoplasm. It carries out the reaction D-ribose 5-phosphate + ATP = 5-phospho-alpha-D-ribose 1-diphosphate + AMP + H(+). It participates in metabolic intermediate biosynthesis; 5-phospho-alpha-D-ribose 1-diphosphate biosynthesis; 5-phospho-alpha-D-ribose 1-diphosphate from D-ribose 5-phosphate (route I): step 1/1. Functionally, 5-phosphoribose 1-diphosphate synthase involved in nucleotide, histidine, and tryptophan biosynthesis. Active in heteromultimeric complexes with other 5-phosphoribose 1-diphosphate synthases. This is Ribose-phosphate pyrophosphokinase 5 from Schizosaccharomyces pombe (strain 972 / ATCC 24843) (Fission yeast).